The following is a 157-amino-acid chain: Transcription elongation factor GreA (157 aa).

Belongs to the GreA/GreB family.

Its function is as follows. Necessary for efficient RNA polymerase transcription elongation past template-encoded arresting sites. The arresting sites in DNA have the property of trapping a certain fraction of elongating RNA polymerases that pass through, resulting in locked ternary complexes. Cleavage of the nascent transcript by cleavage factors such as GreA or GreB allows the resumption of elongation from the new 3'terminus. GreA releases sequences of 2 to 3 nucleotides. The protein is Transcription elongation factor GreA of Brucella abortus (strain S19).